Reading from the N-terminus, the 358-residue chain is Carbohydrate sulfotransferase 10 (358 aa).

Topologically, residues 1–6 (MHHQWL) are cytoplasmic. A helical; Signal-anchor for type II membrane protein transmembrane segment spans residues 7 to 27 (LLAACFWVIFMFMVASKFITL). Residues 28–358 (TFKDPDGYGA…GYRVPDFLLN (331 aa)) lie on the Lumenal side of the membrane. N-linked (GlcNAc...) asparagine glycosylation is present at Asn-101. Residues 129–135 (PKVGNTQ) and 191–199 (RDPFERLIS) each bind 3'-phosphoadenylyl sulfate. A glycan (N-linked (GlcNAc...) asparagine) is linked at Asn-318.

The protein belongs to the sulfotransferase 2 family. In terms of tissue distribution, predominantly expressed in hypertrophic, prehypertrophic and proliferative chondrocytes at E12 but is down-regulated in epiphyseal chondrocytes.

The protein resides in the golgi apparatus membrane. Functionally, catalyzes the transfer of sulfate to position 3 of terminal glucuronic acid of both protein- and lipid-linked oligosaccharides. Participates in biosynthesis of HNK-1 carbohydrate structure, a sulfated glucuronyl-lactosaminyl residue carried by many neural recognition molecules, which is involved in cell interactions during ontogenetic development and in synaptic plasticity in the adult. This chain is Carbohydrate sulfotransferase 10 (CHST10), found in Gallus gallus (Chicken).